Here is a 188-residue protein sequence, read N- to C-terminus: dCTP deaminase (188 aa).

Residues lysine 111–arginine 116, threonine 135–glutamate 137, glutamine 156, tyrosine 170, and glutamine 180 each bind dCTP. The active-site Proton donor/acceptor is glutamate 137.

Belongs to the dCTP deaminase family. Homotrimer.

It catalyses the reaction dCTP + H2O + H(+) = dUTP + NH4(+). It functions in the pathway pyrimidine metabolism; dUMP biosynthesis; dUMP from dCTP (dUTP route): step 1/2. In terms of biological role, catalyzes the deamination of dCTP to dUTP. This is dCTP deaminase from Cupriavidus pinatubonensis (strain JMP 134 / LMG 1197) (Cupriavidus necator (strain JMP 134)).